The following is a 79-amino-acid chain: Exodeoxyribonuclease 7 small subunit (79 aa).

It belongs to the XseB family. As to quaternary structure, heterooligomer composed of large and small subunits.

It localises to the cytoplasm. The enzyme catalyses Exonucleolytic cleavage in either 5'- to 3'- or 3'- to 5'-direction to yield nucleoside 5'-phosphates.. In terms of biological role, bidirectionally degrades single-stranded DNA into large acid-insoluble oligonucleotides, which are then degraded further into small acid-soluble oligonucleotides. This chain is Exodeoxyribonuclease 7 small subunit, found in Dechloromonas aromatica (strain RCB).